The primary structure comprises 163 residues: ATP synthase subunit b 1 (163 aa).

The helical transmembrane segment at 5–25 threads the bilayer; the sequence is FDATFFAFVGLILFLALVVYL.

The protein belongs to the ATPase B chain family. F-type ATPases have 2 components, F(1) - the catalytic core - and F(0) - the membrane proton channel. F(1) has five subunits: alpha(3), beta(3), gamma(1), delta(1), epsilon(1). F(0) has three main subunits: a(1), b(2) and c(10-14). The alpha and beta chains form an alternating ring which encloses part of the gamma chain. F(1) is attached to F(0) by a central stalk formed by the gamma and epsilon chains, while a peripheral stalk is formed by the delta and b chains.

It localises to the cell inner membrane. F(1)F(0) ATP synthase produces ATP from ADP in the presence of a proton or sodium gradient. F-type ATPases consist of two structural domains, F(1) containing the extramembraneous catalytic core and F(0) containing the membrane proton channel, linked together by a central stalk and a peripheral stalk. During catalysis, ATP synthesis in the catalytic domain of F(1) is coupled via a rotary mechanism of the central stalk subunits to proton translocation. In terms of biological role, component of the F(0) channel, it forms part of the peripheral stalk, linking F(1) to F(0). This Rhizobium etli (strain ATCC 51251 / DSM 11541 / JCM 21823 / NBRC 15573 / CFN 42) protein is ATP synthase subunit b 1.